The following is a 303-amino-acid chain: tRNA dimethylallyltransferase (303 aa).

Residue 16–23 (GPTASGKS) coordinates ATP. 18-23 (TASGKS) contributes to the substrate binding site. The tract at residues 41–44 (DSMQ) is interaction with substrate tRNA. A disordered region spans residues 141–161 (AEALHGELSARDPETAGRVRP). Positions 165-169 (QRIVR) are interaction with substrate tRNA.

It belongs to the IPP transferase family. Monomer. Mg(2+) is required as a cofactor.

The enzyme catalyses adenosine(37) in tRNA + dimethylallyl diphosphate = N(6)-dimethylallyladenosine(37) in tRNA + diphosphate. In terms of biological role, catalyzes the transfer of a dimethylallyl group onto the adenine at position 37 in tRNAs that read codons beginning with uridine, leading to the formation of N6-(dimethylallyl)adenosine (i(6)A). In Rhizobium meliloti (strain 1021) (Ensifer meliloti), this protein is tRNA dimethylallyltransferase.